Here is a 212-residue protein sequence, read N- to C-terminus: Golgi SNAP receptor complex member 2 homolog memb-1 (212 aa).

Residues 1–189 (MEAQYQSTNF…QVIDRRVRED (189 aa)) are Cytoplasmic-facing. The chain crosses the membrane as a helical; Anchor for type IV membrane protein span at residues 190–210 (WIFVIGCIVCCIFMYAFYRFW). Over 211 to 212 (RG) the chain is Vesicular.

Belongs to the GOSR2 family. Part of a unique SNARE complex.

The protein localises to the golgi apparatus. Its subcellular location is the cis-Golgi network membrane. It localises to the golgi apparatus membrane. It is found in the endoplasmic reticulum membrane. In terms of biological role, involved in transport of proteins from the cis/medial-Golgi to the trans-Golgi network. The protein is Golgi SNAP receptor complex member 2 homolog memb-1 of Caenorhabditis briggsae.